Reading from the N-terminus, the 286-residue chain is MDTILVFSLIITSYNVTKKELRDSSCQVEPLPDLFPKDVRSIRAELIREAQAEAKRPMFIQNQTVAILQCLGSGSKVKVNLVHSEKRQKVKHILKNLRVMTVPCRNSTAPPSCHLTPASKVQAGFLVTGKAFLPGVSQCKVYPVMGASSETYPSTTTSVTPGKKGEKTTKVDGFSSPLNQDTDENLEKRKKWSIVVKVLIAVTLFVSGIAITVFVIFEVPCPSRCQQVRELCQCQRLRRRPRKEDQQPGTAESQSDTQPKKVGQEAPNSSSPKKAVEITVVHQTYF.

The disordered stretch occupies residues 152-182 (YPSTTTSVTPGKKGEKTTKVDGFSSPLNQDT). A helical transmembrane segment spans residues 198–218 (VLIAVTLFVSGIAITVFVIFE). The disordered stretch occupies residues 239–278 (RRPRKEDQQPGTAESQSDTQPKKVGQEAPNSSSPKKAVEI). The span at 247–257 (QPGTAESQSDT) shows a compositional bias: polar residues.

It is found in the membrane. This is an uncharacterized protein from Bos taurus (Bovine).